The sequence spans 945 residues: MSNKKADSKPQAKYPVNLLDTPFPMRGDLPKREPQWVKEWEERGIYDKIRAASQGRPKFILHDGPPYANGDIHLGHAVNKILKDIVVKSRNMAGFDAPYVPGWDCHGMPIEIQIEKQFGKSLPAAEVMSKARAYATEQIEKQKVGFKRLGVLGDWANPYKTMNFVNEAEEIRALGKIIEKGYVYRGLKPVNWCFDCGSALAEAEVEYKDRTDPTIDVMFAFAEPEKTAQAFGLPALPRADGGIVIWTTTPWTIPANQALNLHPEIVYALVDTERGLLIIAEERVEACMSDFKLTGRIIATTPGVKLANLRFHHPLASAHPGYKRTAPVYLGDYVTTDTGTGVVHSSPAYGIEDFMSCKAHGMTDSDFINPVMGDGRYIESLPLFGGLSIWDANPKIVDALNAAGSLLRSEKYTHSYMHCWRHKTPIIYRATSQWFAGMDVTPRDGGKTLRETALEGVDATAFYPSWGKQRLFSMIANRPDWTLSRQRQWGVPMAFFVHKETGELHPRTLELLEEVAKRVEQSGIEAWQSLDPRELIGDDANLYEKNRDTLDVWFDSGTTHWHVLRGSHKDQLQFPADLYLEGSDQHRGWFHSSLLTASMIDGRAPYKGLLTHGFTVDGEGRKMSKSLGNGIDPHEVANRLGAEIIRLWIASTDYSGELAISEEILKRVTEGYRRIRNTLRFLLANLSDFDFAQHAVPVDEWLEIDRYAVAFSQQLQTELLGHYEKYEFHPVVAKLQTYCSEDLGGFYLDVLKDRLYTSAADSRARRSAQTALYHLTHGLLRVLAPFLSFTAEEAWKVFQPASDTIFTETYYAYPEVAGSAALIDKWALLRDVRGNVTKALEEARTANRIGSSLQAEVTVHASGARYDALTSLGDDLKFVLITSAATVVKVDDEAQESVDVAASKYQKCERCWHYREDVGAHAEHPTLCGRCFSNLFENGEIRSAA.

The short motif at 66 to 76 (PYANGDIHLGH) is the 'HIGH' region element. E581 serves as a coordination point for L-isoleucyl-5'-AMP. The 'KMSKS' region signature appears at 622-626 (KMSKS). K625 serves as a coordination point for ATP. Positions 908, 911, 928, and 931 each coordinate Zn(2+).

The protein belongs to the class-I aminoacyl-tRNA synthetase family. IleS type 1 subfamily. As to quaternary structure, monomer. Zn(2+) serves as cofactor.

It is found in the cytoplasm. The catalysed reaction is tRNA(Ile) + L-isoleucine + ATP = L-isoleucyl-tRNA(Ile) + AMP + diphosphate. Functionally, catalyzes the attachment of isoleucine to tRNA(Ile). As IleRS can inadvertently accommodate and process structurally similar amino acids such as valine, to avoid such errors it has two additional distinct tRNA(Ile)-dependent editing activities. One activity is designated as 'pretransfer' editing and involves the hydrolysis of activated Val-AMP. The other activity is designated 'posttransfer' editing and involves deacylation of mischarged Val-tRNA(Ile). In Burkholderia cenocepacia (strain ATCC BAA-245 / DSM 16553 / LMG 16656 / NCTC 13227 / J2315 / CF5610) (Burkholderia cepacia (strain J2315)), this protein is Isoleucine--tRNA ligase.